Reading from the N-terminus, the 196-residue chain is ATP-dependent Clp protease proteolytic subunit (196 aa).

The Nucleophile role is filled by S101. Residue H126 is part of the active site.

The protein belongs to the peptidase S14 family. Component of the chloroplastic Clp protease core complex.

It is found in the plastid. The protein localises to the chloroplast stroma. The enzyme catalyses Hydrolysis of proteins to small peptides in the presence of ATP and magnesium. alpha-casein is the usual test substrate. In the absence of ATP, only oligopeptides shorter than five residues are hydrolyzed (such as succinyl-Leu-Tyr-|-NHMec, and Leu-Tyr-Leu-|-Tyr-Trp, in which cleavage of the -Tyr-|-Leu- and -Tyr-|-Trp bonds also occurs).. In terms of biological role, cleaves peptides in various proteins in a process that requires ATP hydrolysis. Has a chymotrypsin-like activity. Plays a major role in the degradation of misfolded proteins. The polypeptide is ATP-dependent Clp protease proteolytic subunit (Barbarea verna (Land cress)).